A 181-amino-acid chain; its full sequence is Putative ankyrin repeat protein RF_0782 (181 aa).

2 ANK repeats span residues 24–53 and 54–83; these read YHYS…DINF and GSTP…NTQI.

The polypeptide is Putative ankyrin repeat protein RF_0782 (Rickettsia felis (strain ATCC VR-1525 / URRWXCal2) (Rickettsia azadi)).